An 843-amino-acid chain; its full sequence is Protein P (843 aa).

The tract at residues 1–177 (MPLSYQHFRR…FCGSPYSWEQ (177 aa)) is terminal protein domain (TP). Residues 178–346 (ELQHGSTSLN…YCLSHIINLL (169 aa)) are spacer. A disordered region spans residues 249-301 (TPTRWPSGVEPSGTGHSDNLATRSTSRFHQSEVRKETNPSLSTSKGHTSTGHA). Composition is skewed to polar residues over residues 262 to 276 (TGHSDNLATRSTSRF) and 286 to 299 (NPSLSTSKGHTSTG). Residues 347–690 (EDWGPCYEHG…YMNLYPVARQ (344 aa)) form a polymerase/reverse transcriptase domain (RT) region. One can recognise a Reverse transcriptase domain in the interval 357–600 (EHHIRTPRTP…YSLHFMGYII (244 aa)). Mg(2+) contacts are provided by aspartate 429, aspartate 551, and aspartate 552.

The protein belongs to the hepadnaviridae P protein family.

The catalysed reaction is DNA(n) + a 2'-deoxyribonucleoside 5'-triphosphate = DNA(n+1) + diphosphate. The enzyme catalyses Endonucleolytic cleavage to 5'-phosphomonoester.. Its activity is regulated as follows. Activated by host HSP70 and HSP40 in vitro to be able to bind the epsilon loop of the pgRNA. Because deletion of the RNase H region renders the protein partly chaperone-independent, the chaperones may be needed indirectly to relieve occlusion of the RNA-binding site by this domain. Inhibited by several reverse-transcriptase inhibitors: Lamivudine, Adefovir and Entecavir. Multifunctional enzyme that converts the viral RNA genome into dsDNA in viral cytoplasmic capsids. This enzyme displays a DNA polymerase activity that can copy either DNA or RNA templates, and a ribonuclease H (RNase H) activity that cleaves the RNA strand of RNA-DNA heteroduplexes in a partially processive 3'- to 5'-endonucleasic mode. Neo-synthesized pregenomic RNA (pgRNA) are encapsidated together with the P protein, and reverse-transcribed inside the nucleocapsid. Initiation of reverse-transcription occurs first by binding the epsilon loop on the pgRNA genome, and is initiated by protein priming, thereby the 5'-end of (-)DNA is covalently linked to P protein. Partial (+)DNA is synthesized from the (-)DNA template and generates the relaxed circular DNA (RC-DNA) genome. After budding and infection, the RC-DNA migrates in the nucleus, and is converted into a plasmid-like covalently closed circular DNA (cccDNA). The activity of P protein does not seem to be necessary for cccDNA generation, and is presumably released from (+)DNA by host nuclear DNA repair machinery. The sequence is that of Protein P from Homo sapiens (Human).